We begin with the raw amino-acid sequence, 427 residues long: Interleukin-13 receptor subunit alpha-1 (427 aa).

An N-terminal signal peptide occupies residues 1–21 (MEWPARLCGLWALLLCAGGGG). Residues 22-343 (GGGGAAPTET…MSIGKKRNST (322 aa)) are Extracellular-facing. 3 Fibronectin type-III domains span residues 34–123 (PVTN…PPEG), 128–226 (AVTE…TSRV), and 227–339 (KPDP…IGKK). Residues N37 and N61 are each glycosylated (N-linked (GlcNAc...) asparagine). 3 disulfides stabilise this stretch: C62/C102, C95/C117, and C134/C144. 3 N-linked (GlcNAc...) asparagine glycosylation sites follow: N105, N138, and N157. The cysteines at positions 173 and 185 are disulfide-linked. N-linked (GlcNAc...) asparagine glycans are attached at residues N235, N265, N293, N329, and N341. Cystine bridges form between C257-C320 and C282-C296. The short motif at 327–331 (WSNWS) is the WSXWS motif element. A helical transmembrane segment spans residues 344 to 367 (LYITMLLIVPVIVAGAIIVLLLYL). The Cytoplasmic segment spans residues 368–427 (KRLKIIIFPPIPDPGKIFKEMFGDQNDDTLHWKKYDIYEKQTKEETDSVVLIENLKKASQ). Positions 374–382 (IFPPIPDPG) match the Box 1 motif motif.

The protein belongs to the type I cytokine receptor family. Type 5 subfamily. Interleukin-13 receptor is a complex of IL4R, IL13RA1, and possibly other components. Interacts with TRAF3IP1. Interacts with IL4. In terms of tissue distribution, ubiquitous. Highest levels in heart, liver, skeletal muscle and ovary; lowest levels in brain, lung and kidney. Also found in B-cells, T-cells and endothelial cells.

Its subcellular location is the membrane. Functionally, binds with low affinity to interleukin-13 (IL13). Together with IL4RA can form a functional receptor for IL13. Also serves as an alternate accessory protein to the common cytokine receptor gamma chain for interleukin-4 (IL4) signaling, but cannot replace the function of IL2RG in allowing enhanced interleukin-2 (IL2) binding activity. This is Interleukin-13 receptor subunit alpha-1 (IL13RA1) from Homo sapiens (Human).